The primary structure comprises 120 residues: Putative non-specific lipid-transfer protein 14 (120 aa).

The N-terminal stretch at 1-22 is a signal peptide; the sequence is MTRSFSPVVSLFLLLLQTICSA. Disulfide bonds link Cys-30/Cys-80, Cys-40/Cys-57, Cys-58/Cys-102, and Cys-78/Cys-116.

It belongs to the plant LTP family.

In terms of biological role, plant non-specific lipid-transfer proteins transfer phospholipids as well as galactolipids across membranes. May play a role in wax or cutin deposition in the cell walls of expanding epidermal cells and certain secretory tissues. The chain is Putative non-specific lipid-transfer protein 14 (LTP14) from Arabidopsis thaliana (Mouse-ear cress).